The chain runs to 242 residues: DNA repair protein RecO (242 aa).

It belongs to the RecO family.

Its function is as follows. Involved in DNA repair and RecF pathway recombination. The sequence is that of DNA repair protein RecO from Dechloromonas aromatica (strain RCB).